A 290-amino-acid polypeptide reads, in one-letter code: PIH1 domain-containing protein 1 (290 aa).

Residues S12, S16, and S173 each carry the phosphoserine modification.

The protein belongs to the PIH1 family. Component of the R2TP complex composed at least of RUVBL1, RUVBL2, RPAP3 and PIHD1. Component of the PAQosome complex which is responsible for the biogenesis of several protein complexes and which consists of R2TP complex members RUVBL1, RUVBL2, RPAP3 and PIH1D1, URI complex members PFDN2, PFDN6, PDRG1, UXT and URI1 as well as ASDURF, POLR2E and DNAAF10/WDR92. Interacts with phosphorylated TELO2 and mediates interaction of TELO2 with the R2TP complex. Interacts with phosphorylated ECD, EFTUD2/SNRP116, RPB1 and UBR5 and with RPB1 in a phosphorylation-independent manner. Interacts with the core C/D box snoRNP particle components NOP58 and FBL and with RUVBL1/TIP49. Interacts with RPAP3 and DNAAF10. Interacts with histone H4 and with SWI/SNF complex member SMARCB1/SNF5. Interacts with the mTORC1 complex member RPTOR. Interacts with MSL1.

Its subcellular location is the nucleus. In terms of biological role, involved in the assembly of C/D box small nucleolar ribonucleoprotein (snoRNP) particles. Recruits the SWI/SNF complex to the core promoter of rRNA genes and enhances pre-rRNA transcription. Mediates interaction of TELO2 with the R2TP complex which is necessary for the stability of MTOR and SMG1. Positively regulates the assembly and activity of the mTORC1 complex. In Rattus norvegicus (Rat), this protein is PIH1 domain-containing protein 1 (Pih1d1).